The primary structure comprises 559 residues: Dihydroxy-acid dehydratase (559 aa).

Asp-78 provides a ligand contact to Mg(2+). Cys-119 provides a ligand contact to [2Fe-2S] cluster. The Mg(2+) site is built by Asp-120 and Lys-121. An N6-carboxylysine modification is found at Lys-121. Cys-191 is a [2Fe-2S] cluster binding site. Glu-442 provides a ligand contact to Mg(2+). Residue Ser-468 is the Proton acceptor of the active site.

This sequence belongs to the IlvD/Edd family. In terms of assembly, homodimer. [2Fe-2S] cluster is required as a cofactor. It depends on Mg(2+) as a cofactor.

It carries out the reaction (2R)-2,3-dihydroxy-3-methylbutanoate = 3-methyl-2-oxobutanoate + H2O. The catalysed reaction is (2R,3R)-2,3-dihydroxy-3-methylpentanoate = (S)-3-methyl-2-oxopentanoate + H2O. Its pathway is amino-acid biosynthesis; L-isoleucine biosynthesis; L-isoleucine from 2-oxobutanoate: step 3/4. It participates in amino-acid biosynthesis; L-valine biosynthesis; L-valine from pyruvate: step 3/4. Functions in the biosynthesis of branched-chain amino acids. Catalyzes the dehydration of (2R,3R)-2,3-dihydroxy-3-methylpentanoate (2,3-dihydroxy-3-methylvalerate) into 2-oxo-3-methylpentanoate (2-oxo-3-methylvalerate) and of (2R)-2,3-dihydroxy-3-methylbutanoate (2,3-dihydroxyisovalerate) into 2-oxo-3-methylbutanoate (2-oxoisovalerate), the penultimate precursor to L-isoleucine and L-valine, respectively. This Agathobacter rectalis (strain ATCC 33656 / DSM 3377 / JCM 17463 / KCTC 5835 / VPI 0990) (Eubacterium rectale) protein is Dihydroxy-acid dehydratase.